Consider the following 182-residue polypeptide: ATP synthase subunit delta, mitochondrial (182 aa).

The transit peptide at 1–17 directs the protein to the mitochondrion; the sequence is MFRTFGRRLVSCTLPLL.

This sequence belongs to the ATPase epsilon chain family. As to quaternary structure, F-type ATPases have 2 components, F(1) - the catalytic core - and F(o) - the membrane proton channel. F(1) has five subunits: alpha(3), beta(3), gamma(1), delta(1), epsilon(1), plus the additional subunit P18 (Tb427.05.1710) that is not present in F(1)F(o) ATP synthase from metazoa. Subunit P18 (Tb927.5.1710) interacts with the alpha subunit with a 1:1 stoichiometry; the interaction is direct. Subunit gamma is part of the central stalk. F(o) has three main subunits: a, b and c. The trypanosomal ATPase complex contains additional subunits that are not present in the F(1)F(o) ATP synthase from metazoa.

The protein resides in the mitochondrion. The protein localises to the mitochondrion inner membrane. Its function is as follows. Mitochondrial membrane ATP synthase (F(1)F(o) ATP synthase) produces ATP from ADP in the presence of a proton gradient across the membrane which is generated by electron transport complexes of the respiratory chain. F-type ATPases consist of two structural domains, F(1) - containing the extramembraneous catalytic core, and F(o) - containing the membrane proton channel, linked together by a central stalk and a peripheral stalk. During catalysis, ATP synthesis in the catalytic domain of F(1) is coupled via a rotary mechanism of the central stalk subunits to proton translocation. Subunits alpha and beta form the catalytic core in F(1). Rotation of the central stalk against the surrounding alpha(3)beta(3) subunits leads to hydrolysis of ATP in three separate catalytic sites on the beta subunits. Contrary to the procyclic, insect form that requires F(1)F(o) ATP synthase for ATP synthesis, the bloodstream form relies on ATP hydrolysis by F(1)F(o) ATP synthase to maintain its mitochondrial membrane potential. This chain is ATP synthase subunit delta, mitochondrial, found in Trypanosoma brucei brucei.